The chain runs to 1190 residues: Ras-specific guanine nucleotide-releasing factor 2 (1190 aa).

The PH 1 domain occupies 22-133 (EGTKRGFLSK…WMEAIHQASY (112 aa)). The stretch at 155–193 (ETEKIAANQLRHQLEDQDTEIERLKSEIVALNKTKERMR) forms a coiled coil. The IQ domain occupies 205-234 (DIKKIKKVQSFMRGWLCRRKWKTIVQDYIC). Residues 243–429 (KRNQIVFTMV…EELSRVMHDE (187 aa)) form the DH domain. In terms of domain architecture, PH 2 spans 470–588 (PSVERGKLSK…WMSDISQCVD (119 aa)). The region spanning 635–755 (KVPQIRYASV…LTSSLNSRIG (121 aa)) is the N-terminal Ras-GEF domain. The disordered stretch occupies residues 713 to 744 (VDGKSPRLCRKFSSPPPLAVSRTSSPVRARKL). A phosphoserine mark is found at Ser-725 and Ser-726. Position 736 is a phosphoserine; by CDK5 (Ser-736). Positions 743 to 751 (KLSLTSSLN) are regulates proteasomal degradation. A phosphoserine mark is found at Ser-745 and Ser-749. The tract at residues 757–826 (LDLTTSSSSS…QPGGQVADST (70 aa)) is disordered. The span at 760–776 (TTSSSSSSPTTTVHSPA) shows a compositional bias: low complexity. The segment covering 798–810 (TDMSPCRSPSTTP) has biased composition (polar residues). Phosphoserine is present on residues Ser-801, Ser-805, and Ser-925. One can recognise a Ras-GEF domain in the interval 955 to 1187 (SAMELAEQIT…YELSLKIEPR (233 aa)). A responsible of the affinity for farnesylated versus geranylgeranylated Ras region spans residues 1052-1081 (ALNRSAIYRLKKTWTKVSKQTKALMDKLQK).

As to quaternary structure, homooligomer and heterooligomer with RASGRF1. Interacts with Ras and RAC1. Interacts in a calcium-dependent manner with calmodulin. Interacts with CDK5R1 and probably EPB49. Interacts with the AMPA receptor through GRIA1. Interacts with microtubules. In terms of processing, phosphorylated by CDK5; down-regulates RASGRF2-mediated RAC1 activation. Post-translationally, ubiquitinated upon interaction with Ras. Ubiquitination leads to degradation through the 26S proteasome. In terms of tissue distribution, widely expressed. Detected in brain, lung, spleen, pancreas, kidney, liver, heart, mammary gland and skeletal muscle.

The protein localises to the cytoplasm. The protein resides in the cell membrane. It localises to the endoplasmic reticulum membrane. Its function is as follows. Functions as a calcium-regulated nucleotide exchange factor activating both Ras and RAC1 through the exchange of bound GDP for GTP. Preferentially activates HRAS in vivo compared to RRAS based on their different types of prenylation. Functions in synaptic plasticity by contributing to the induction of long term potentiation. The protein is Ras-specific guanine nucleotide-releasing factor 2 (Rasgrf2) of Rattus norvegicus (Rat).